The chain runs to 340 residues: Glycerol-3-phosphate dehydrogenase [NAD(P)+] (340 aa).

S15, Y16, H36, and K110 together coordinate NADPH. Positions 110, 139, and 141 each coordinate sn-glycerol 3-phosphate. A143 provides a ligand contact to NADPH. Residues K195, D248, S258, R259, and N260 each coordinate sn-glycerol 3-phosphate. Catalysis depends on K195, which acts as the Proton acceptor. R259 contacts NADPH. The NADPH site is built by V283 and E285.

Belongs to the NAD-dependent glycerol-3-phosphate dehydrogenase family.

Its subcellular location is the cytoplasm. The enzyme catalyses sn-glycerol 3-phosphate + NAD(+) = dihydroxyacetone phosphate + NADH + H(+). It catalyses the reaction sn-glycerol 3-phosphate + NADP(+) = dihydroxyacetone phosphate + NADPH + H(+). It functions in the pathway membrane lipid metabolism; glycerophospholipid metabolism. In terms of biological role, catalyzes the reduction of the glycolytic intermediate dihydroxyacetone phosphate (DHAP) to sn-glycerol 3-phosphate (G3P), the key precursor for phospholipid synthesis. This is Glycerol-3-phosphate dehydrogenase [NAD(P)+] from Baumannia cicadellinicola subsp. Homalodisca coagulata.